Consider the following 425-residue polypeptide: Proline--tRNA ligase (425 aa).

It belongs to the class-II aminoacyl-tRNA synthetase family. ProS type 2 subfamily. Homodimer.

It localises to the cytoplasm. The enzyme catalyses tRNA(Pro) + L-proline + ATP = L-prolyl-tRNA(Pro) + AMP + diphosphate. In terms of biological role, catalyzes the attachment of proline to tRNA(Pro) in a two-step reaction: proline is first activated by ATP to form Pro-AMP and then transferred to the acceptor end of tRNA(Pro). This is Proline--tRNA ligase from Anaplasma marginale (strain St. Maries).